The sequence spans 249 residues: Enolase-phosphatase E1 (249 aa).

Mg(2+) is bound by residues Asp-14 and Glu-16. Substrate contacts are provided by residues 141-142 (SS) and Lys-175. Residue Asp-200 coordinates Mg(2+).

This sequence belongs to the HAD-like hydrolase superfamily. MasA/MtnC family. In terms of assembly, monomer. The cofactor is Mg(2+).

The protein localises to the cytoplasm. It is found in the nucleus. The catalysed reaction is 5-methylsulfanyl-2,3-dioxopentyl phosphate + H2O = 1,2-dihydroxy-5-(methylsulfanyl)pent-1-en-3-one + phosphate. It participates in amino-acid biosynthesis; L-methionine biosynthesis via salvage pathway; L-methionine from S-methyl-5-thio-alpha-D-ribose 1-phosphate: step 3/6. It functions in the pathway amino-acid biosynthesis; L-methionine biosynthesis via salvage pathway; L-methionine from S-methyl-5-thio-alpha-D-ribose 1-phosphate: step 4/6. In terms of biological role, bifunctional enzyme that catalyzes the enolization of 2,3-diketo-5-methylthiopentyl-1-phosphate (DK-MTP-1-P) into the intermediate 2-hydroxy-3-keto-5-methylthiopentenyl-1-phosphate (HK-MTPenyl-1-P), which is then dephosphorylated to form the acireductone 1,2-dihydroxy-3-keto-5-methylthiopentene (DHK-MTPene). The chain is Enolase-phosphatase E1 from Drosophila mojavensis (Fruit fly).